A 666-amino-acid polypeptide reads, in one-letter code: Zinc finger MYM-type protein 5 (666 aa).

Glycyl lysine isopeptide (Lys-Gly) (interchain with G-Cter in SUMO2) cross-links involve residues Lys85, Lys88, Lys146, and Lys163. Residues 87 to 106 are disordered; the sequence is EKPQGNYSVIPPPSRDLASQ. A disordered region spans residues 191–212; that stretch reads SPDSWISQSASFPRNQKQPGVD. The segment covering 194–208 has biased composition (polar residues); the sequence is SWISQSASFPRNQKQ. Lys222 is covalently cross-linked (Glycyl lysine isopeptide (Lys-Gly) (interchain with G-Cter in SUMO2)). 4 consecutive MYM-type zinc fingers follow at residues 262-296, 308-348, 355-390, and 401-428; these read HLFC…KKAD, QEFC…RHEV, HKLC…KSTG, and KRFC…ASEN. Glycyl lysine isopeptide (Lys-Gly) (interchain with G-Cter in SUMO2) cross-links involve residues Lys440, Lys452, Lys459, and Lys549.

In terms of assembly, interacts (via N-terminal 120 amino acid region) with ETV5 (via C-terminal).

Its subcellular location is the nucleus. Functions as a transcriptional regulator. This is Zinc finger MYM-type protein 5 (ZMYM5) from Macaca fascicularis (Crab-eating macaque).